A 100-amino-acid polypeptide reads, in one-letter code: Small ribosomal subunit protein uS14c (100 aa).

The protein belongs to the universal ribosomal protein uS14 family. Part of the 30S ribosomal subunit.

It is found in the plastid. The protein resides in the chloroplast. Functionally, binds 16S rRNA, required for the assembly of 30S particles. This chain is Small ribosomal subunit protein uS14c, found in Citrus sinensis (Sweet orange).